Consider the following 167-residue polypeptide: Crossover junction endodeoxyribonuclease RuvC (167 aa).

Residues Asp8, Glu67, and Asp139 contribute to the active site. Asp8, Glu67, and Asp139 together coordinate Mg(2+).

This sequence belongs to the RuvC family. Homodimer which binds Holliday junction (HJ) DNA. The HJ becomes 2-fold symmetrical on binding to RuvC with unstacked arms; it has a different conformation from HJ DNA in complex with RuvA. In the full resolvosome a probable DNA-RuvA(4)-RuvB(12)-RuvC(2) complex forms which resolves the HJ. Mg(2+) serves as cofactor.

The protein resides in the cytoplasm. It catalyses the reaction Endonucleolytic cleavage at a junction such as a reciprocal single-stranded crossover between two homologous DNA duplexes (Holliday junction).. Its function is as follows. The RuvA-RuvB-RuvC complex processes Holliday junction (HJ) DNA during genetic recombination and DNA repair. Endonuclease that resolves HJ intermediates. Cleaves cruciform DNA by making single-stranded nicks across the HJ at symmetrical positions within the homologous arms, yielding a 5'-phosphate and a 3'-hydroxyl group; requires a central core of homology in the junction. The consensus cleavage sequence is 5'-(A/T)TT(C/G)-3'. Cleavage occurs on the 3'-side of the TT dinucleotide at the point of strand exchange. HJ branch migration catalyzed by RuvA-RuvB allows RuvC to scan DNA until it finds its consensus sequence, where it cleaves and resolves the cruciform DNA. The chain is Crossover junction endodeoxyribonuclease RuvC from Halorhodospira halophila (strain DSM 244 / SL1) (Ectothiorhodospira halophila (strain DSM 244 / SL1)).